Consider the following 243-residue polypeptide: RWD domain-containing protein 1 (243 aa).

The residue at position 2 (T2) is an N-acetylthreonine. In terms of domain architecture, RWD spans 10 to 114; that stretch reads NELEALESIY…TAVQEKLNEI (105 aa). The tract at residues 142 to 197 is interaction with DRG2; that stretch reads HGTPVTIENFLNWKAKFDAELLEIKKKRMKEEEQAGKNKLSGKQLFETDHNLDTSD. The residue at position 144 (T144) is a Phosphothreonine. The interval 198–243 is disordered; it reads IQFLEDAGNNVEVDESLFQEMDDLELEDDEDDPDYNPADPESDSAD. The span at 209–243 shows a compositional bias: acidic residues; sequence EVDESLFQEMDDLELEDDEDDPDYNPADPESDSAD.

The protein belongs to the RWDD1/GIR2 family. As to quaternary structure, interacts with DRG2. Interacts with androgen receptor.

In terms of biological role, protects DRG2 from proteolytic degradation. This chain is RWD domain-containing protein 1 (RWDD1), found in Homo sapiens (Human).